The following is a 580-amino-acid chain: Pescadillo homolog (580 aa).

Over residues 291–303 (EPEEENEVDEFPA) the composition is skewed to acidic residues. The segment at 291 to 321 (EPEEENEVDEFPADPENAGQEEEQKKQLQEE) is disordered. Residues 312 to 321 (EEQKKQLQEE) show a composition bias toward basic and acidic residues. In terms of domain architecture, BRCT spans 323–416 (KHKSMFVGLK…MLLPVEDYFP (94 aa)). The interval 448 to 496 (KGENPEDDDDDDEEDDEDEEEDDEDEDDEENEEEEEDKKLRHLENKKVG) is disordered. A compositionally biased stretch (acidic residues) spans 452 to 483 (PEDDDDDDEEDDEDEEEDDEDEDDEENEEEEE). Over residues 484-494 (DKKLRHLENKK) the composition is skewed to basic and acidic residues.

The protein belongs to the pescadillo family. In terms of assembly, component of the PeBoW complex, composed of bop1, pes1 and wdr12. The complex is held together by bop1, which interacts with pes1 via its N-terminal domain and with wdr12 via a high-affinity interaction between the seven-bladed beta-propeller domains of the 2 proteins. The PeBoW complex associates with the 66S pre-ribosome.

It is found in the nucleus. Its subcellular location is the nucleolus. The protein localises to the nucleoplasm. In terms of biological role, component of the PeBoW complex, which is required for maturation of 28S and 5.8S ribosomal RNAs and formation of the 60S ribosome. In Xenopus tropicalis (Western clawed frog), this protein is Pescadillo homolog (pes1).